A 388-amino-acid polypeptide reads, in one-letter code: ATP phosphoribosyltransferase regulatory subunit (388 aa).

Belongs to the class-II aminoacyl-tRNA synthetase family. HisZ subfamily. Heteromultimer composed of HisG and HisZ subunits.

It localises to the cytoplasm. The protein operates within amino-acid biosynthesis; L-histidine biosynthesis; L-histidine from 5-phospho-alpha-D-ribose 1-diphosphate: step 1/9. Functionally, required for the first step of histidine biosynthesis. May allow the feedback regulation of ATP phosphoribosyltransferase activity by histidine. This Acinetobacter baumannii (strain AB307-0294) protein is ATP phosphoribosyltransferase regulatory subunit.